The following is a 335-amino-acid chain: Mesoderm-specific transcript homolog protein (335 aa).

3 consecutive transmembrane segments (helical) span residues 13-33 (WWVQ…HIPP), 88-108 (IWEG…LGFG), and 266-286 (VGAL…LDPV). The AB hydrolase-1 domain occupies 71–310 (IVVLLHGFPT…PRSTVSILDD (240 aa)). An RVIALD motif is present at residues 98–103 (RVIALD).

It belongs to the AB hydrolase superfamily. As to expression, no detectable transcripts during preimplantation development. Isoform 1 was not detected in either in vitro-matured oocytes (IVF) or parthenogenetically activated (PA) blastocyst. Isoform 2 was expressed in IVF and PA blastocysts.

Its subcellular location is the endoplasmic reticulum membrane. The protein is Mesoderm-specific transcript homolog protein (MEST) of Bos taurus (Bovine).